The sequence spans 234 residues: Large ribosomal subunit protein uL1 (234 aa).

Belongs to the universal ribosomal protein uL1 family. Part of the 50S ribosomal subunit.

Binds directly to 23S rRNA. The L1 stalk is quite mobile in the ribosome, and is involved in E site tRNA release. In terms of biological role, protein L1 is also a translational repressor protein, it controls the translation of the L11 operon by binding to its mRNA. This Prochlorococcus marinus (strain SARG / CCMP1375 / SS120) protein is Large ribosomal subunit protein uL1.